The primary structure comprises 189 residues: Lipid A acyltransferase PagP (189 aa).

A signal peptide spans 1-23 (MRLKLILYFLILSCYLGIGSARA). Residues His61, Asp104, and Ser105 contribute to the active site.

It belongs to the lipid A palmitoyltransferase family. As to quaternary structure, homodimer.

It is found in the cell outer membrane. It carries out the reaction a lipid A + a 1,2-diacyl-sn-glycero-3-phosphocholine = a hepta-acyl lipid A + a 2-acyl-sn-glycero-3-phosphocholine. The catalysed reaction is a lipid IVA + a 1,2-diacyl-sn-glycero-3-phosphocholine = a lipid IVB + a 2-acyl-sn-glycero-3-phosphocholine. The enzyme catalyses a lipid IIA + a 1,2-diacyl-sn-glycero-3-phosphocholine = a lipid IIB + a 2-acyl-sn-glycero-3-phosphocholine. Its function is as follows. Transfers a fatty acid residue from the sn-1 position of a phospholipid to the N-linked hydroxyfatty acid chain on the proximal unit of lipid A or its precursors. This Erwinia tasmaniensis (strain DSM 17950 / CFBP 7177 / CIP 109463 / NCPPB 4357 / Et1/99) protein is Lipid A acyltransferase PagP.